The chain runs to 271 residues: MVVAKKSLGQHFLMDESFLDRIVNALPPLNSLRLIEIGVGLGDLTLKLLDRYPLKTYEIDSNLCEKMRARLRAEKKPFQLELVEKDALFLKEEEPYFLISNLPYYIATRLVLNALKDPKCRGLLVMTQKEVALKFCAKDSQNALSVLAHTIGNATLLFDVPPSAFSPPPKVFSSVFEVIKEPLKEKALASLAQAPFFEEALQKGFETLEDFLKACFSSPRKTLSNNLKKSVSYKEKLDKVLDFLALENQPTSVRASEVKDYLKLLKSVLKG.

Residues His11, Leu13, Gly38, Glu58, Asp86, and Asn101 each coordinate S-adenosyl-L-methionine.

This sequence belongs to the class I-like SAM-binding methyltransferase superfamily. rRNA adenine N(6)-methyltransferase family. RsmA subfamily.

Its subcellular location is the cytoplasm. The enzyme catalyses adenosine(1518)/adenosine(1519) in 16S rRNA + 4 S-adenosyl-L-methionine = N(6)-dimethyladenosine(1518)/N(6)-dimethyladenosine(1519) in 16S rRNA + 4 S-adenosyl-L-homocysteine + 4 H(+). In terms of biological role, specifically dimethylates two adjacent adenosines (A1518 and A1519) in the loop of a conserved hairpin near the 3'-end of 16S rRNA in the 30S particle. May play a critical role in biogenesis of 30S subunits. This chain is Ribosomal RNA small subunit methyltransferase A, found in Helicobacter pylori (strain J99 / ATCC 700824) (Campylobacter pylori J99).